The following is a 241-amino-acid chain: ATP-dependent Clp protease ATP-binding subunit CLPT2, chloroplastic (241 aa).

Residues 1–75 (MAAHSSCNFA…PRRIHKSAIS (75 aa)) constitute a chloroplast transit peptide. Residues 91–237 (KPKWSWRAIK…ELESFASESG (147 aa)) form the Clp R domain. Repeat stretches follow at residues 94-159 (WSWR…LGKA) and 171-237 (LTED…SESG).

This sequence belongs to the ClpA/ClpB family. As to quaternary structure, monomer and homodimer. The dimers monomerize before association to the P-ring. Component of the chloroplastic Clp protease core complex which consist of at least 16 proteins: CLPP4 (3 copies), CLPP5 (3 copies), CLPR4 (2 copies), ClpP1 (1 copy), CLPP6 (1 copy), CLPR2 (1 copy), CLPT1 (1 copy), CLPT2 (1 copy) and 3 copies of CLPP3 and/or CLPR1 and/or CLPR3. Interacts with AHK2. Interacts with CPN21. No interactions with CLPS1.

Its subcellular location is the plastid. It localises to the chloroplast. Its function is as follows. Accessory protein regulating the assembly of the plastidial Clp protease system. CLPT1 first binds to the heptameric P-ring containing the CLP3-6 subunits followed by CLPT2, and only then does the P-ring combine with the R-ring composed of the clpP1 and CLPR1-4 subunits. Once the core complex is fully assembled, it then associates to the CLPC chaperone partner to form the functional protease. CLPT2 and CLPT1 are partially redundant. The chain is ATP-dependent Clp protease ATP-binding subunit CLPT2, chloroplastic from Arabidopsis thaliana (Mouse-ear cress).